The sequence spans 287 residues: Isopentenyl-diphosphate Delta-isomerase I (287 aa).

Residues 105–257 (LLHRAFSVFL…GVKLSPWFRL (153 aa)) form the Nudix hydrolase domain. Residues cysteine 142 and tyrosine 207 contribute to the active site.

It belongs to the IPP isomerase type 1 family.

It catalyses the reaction isopentenyl diphosphate = dimethylallyl diphosphate. It participates in isoprenoid biosynthesis; dimethylallyl diphosphate biosynthesis; dimethylallyl diphosphate from isopentenyl diphosphate: step 1/1. Its pathway is porphyrin-containing compound metabolism; chlorophyll biosynthesis. In terms of biological role, catalyzes the 1,3-allylic rearrangement of the homoallylic substrate isopentenyl (IPP) to its highly electrophilic allylic isomer, dimethylallyl diphosphate (DMAPP). The chain is Isopentenyl-diphosphate Delta-isomerase I (IPI1) from Clarkia breweri (Fairy fans).